Reading from the N-terminus, the 623-residue chain is uncharacterized protein (623 aa).

Positions 1 to 18 (MSSRSGSADTFTQRSDSN) are enriched in polar residues. Disordered stretches follow at residues 1–107 (MSSR…DPFT), 132–181 (LGSD…EIGA), 207–231 (SWNLNSRHKRRDSNDRTVQSRADTD), 298–349 (REET…ESDQ), 384–464 (RKSV…DRNV), 533–553 (SINDLQQGTSSSQNQAMPPET), and 568–623 (VESR…TKGD). A compositionally biased stretch (basic and acidic residues) spans 25-34 (ISLDDVRDNN). The segment covering 39 to 49 (SSSGISTTGSS) has biased composition (low complexity). Residues 132 to 144 (LGSDTARPTSNGG) show a composition bias toward polar residues. A compositionally biased stretch (low complexity) spans 165-177 (STSTWGPSGPTTP). The segment covering 328–339 (EKSTFSRISEQP) has biased composition (polar residues). Low complexity predominate over residues 400-417 (QTPTISTASSPIQPSSSP). Polar residues predominate over residues 533–548 (SINDLQQGTSSSQNQA). Positions 604 to 614 (PSASPSTSRTR) are enriched in low complexity.

This is an uncharacterized protein from Emericella nidulans (strain FGSC A4 / ATCC 38163 / CBS 112.46 / NRRL 194 / M139) (Aspergillus nidulans).